Reading from the N-terminus, the 254-residue chain is Probable phosphoglycerate mutase 4 (254 aa).

Residues 10–17 (RHGESTWN) and 23–24 (SC) each bind substrate. The Tele-phosphohistidine intermediate role is filled by His11. Residues Ser14 and Ser23 each carry the phosphoserine modification. A Phosphotyrosine modification is found at Tyr26. Ser31 is subject to Phosphoserine. Substrate is bound by residues Arg62, 89 to 92 (ERHY), and Lys100. Residue Glu89 is the Proton donor/acceptor of the active site. Lys106 carries the N6-acetyllysine modification. Residue 116–117 (RR) participates in substrate binding. Ser118 bears the Phosphoserine mark. 187–188 (GN) provides a ligand contact to substrate. Residue Lys251 is modified to N6-acetyllysine; alternate. Lys251 is subject to N6-succinyllysine; alternate. 2 positions are modified to N6-acetyllysine: Lys253 and Lys254.

It belongs to the phosphoglycerate mutase family. BPG-dependent PGAM subfamily.

The catalysed reaction is (2R)-2-phosphoglycerate = (2R)-3-phosphoglycerate. It carries out the reaction (2R)-3-phospho-glyceroyl phosphate = (2R)-2,3-bisphosphoglycerate + H(+). The chain is Probable phosphoglycerate mutase 4 (PGAM4) from Pan troglodytes (Chimpanzee).